A 506-amino-acid chain; its full sequence is F-box protein At4g02760 (506 aa).

In terms of domain architecture, F-box spans 115–161 (TSWPLLPELTIKVFSMLDTKSLMQASACCTMFNKCAMDRVCYSHIDL). The interval 452 to 506 (TFVAEFRSPSPSESDVRSPSPSSSSDSSSSSDSSSSSSSGESSDESGTEEEEDED) is disordered. Over residues 459-492 (SPSPSESDVRSPSPSSSSDSSSSSDSSSSSSSGE) the composition is skewed to low complexity. Acidic residues predominate over residues 493 to 506 (SSDESGTEEEEDED).

The chain is F-box protein At4g02760 from Arabidopsis thaliana (Mouse-ear cress).